The primary structure comprises 441 residues: Xaa-Pro dipeptidase (441 aa).

Asp-244, Asp-255, His-336, Glu-381, and Glu-420 together coordinate Mn(2+).

It belongs to the peptidase M24B family. Bacterial-type prolidase subfamily. Requires Mn(2+) as cofactor.

The enzyme catalyses Xaa-L-Pro dipeptide + H2O = an L-alpha-amino acid + L-proline. In terms of biological role, splits dipeptides with a prolyl residue in the C-terminal position. The sequence is that of Xaa-Pro dipeptidase from Xanthomonas campestris pv. campestris (strain 8004).